A 134-amino-acid chain; its full sequence is Phosphoribosyl-AMP cyclohydrolase (134 aa).

Asp80 is a Mg(2+) binding site. Cys81 serves as a coordination point for Zn(2+). Asp82 and Asp84 together coordinate Mg(2+). Zn(2+) contacts are provided by Cys98 and Cys105.

It belongs to the PRA-CH family. As to quaternary structure, homodimer. The cofactor is Mg(2+). It depends on Zn(2+) as a cofactor.

It localises to the cytoplasm. The enzyme catalyses 1-(5-phospho-beta-D-ribosyl)-5'-AMP + H2O = 1-(5-phospho-beta-D-ribosyl)-5-[(5-phospho-beta-D-ribosylamino)methylideneamino]imidazole-4-carboxamide. Its pathway is amino-acid biosynthesis; L-histidine biosynthesis; L-histidine from 5-phospho-alpha-D-ribose 1-diphosphate: step 3/9. Functionally, catalyzes the hydrolysis of the adenine ring of phosphoribosyl-AMP. This chain is Phosphoribosyl-AMP cyclohydrolase, found in Bordetella avium (strain 197N).